A 605-amino-acid chain; its full sequence is MNSQDLKKRQEKIRNFSIIAHIDHGKSTLADRILEKTETVSSREMQAQLLDSMDLERERGITIKLNAIELNYTAKDGETYIFHLIDTPGHVDFTYEVSRSLAACEGAILVVDAAQGIEAQTLANVYLALDNDLEILPVINKIDLPAADPERVRHEVEDVIGLDASEAVLASAKAGIGIEEILEQIVEKVPAPTGDVDAPLQALIFDSVYDAYRGVILQVRIVNGIVKPGDKIQMMSNGKTFDVTEVGIFTPKAVGRDFLATGDVGYVAASIKTVADTRVGDTVTLANNPAKEALHGYKQMNPMVFAGIYPIESNKYNDLREALEKLQLNDASLQFEPETSQALGFGFRCGFLGLLHMDVIQERLEREFNIDLIMTAPSVVYHVHTTDEDMIEVSNPSEFPDPTRVAFIEEPYVKAQIMVPQEFVGAVMELSQRKRGDFVTMDYIDDNRVNVIYQIPLAEIVFDFFDKLKSSTRGYASFDYDMSEYRRSQLVKMDILLNGDKVDALSFIVHKEFAYERGKIIVEKLKKIIPRQQFEVPIQAAIGQKIVARSDIKALRKNVLAKCYGGDVSRKRKLLEKQKAGKKRNEGYWFCRSPSRSLLECSFNG.

Positions E11 to T193 constitute a tr-type G domain. Residues D23 to T28 and N140 to D143 contribute to the GTP site.

It belongs to the TRAFAC class translation factor GTPase superfamily. Classic translation factor GTPase family. LepA subfamily.

The protein localises to the cell membrane. It carries out the reaction GTP + H2O = GDP + phosphate + H(+). Required for accurate and efficient protein synthesis under certain stress conditions. May act as a fidelity factor of the translation reaction, by catalyzing a one-codon backward translocation of tRNAs on improperly translocated ribosomes. Back-translocation proceeds from a post-translocation (POST) complex to a pre-translocation (PRE) complex, thus giving elongation factor G a second chance to translocate the tRNAs correctly. Binds to ribosomes in a GTP-dependent manner. The chain is Elongation factor 4 from Streptococcus pyogenes serotype M4 (strain MGAS10750).